Reading from the N-terminus, the 885-residue chain is Alanine--tRNA ligase (885 aa).

4 residues coordinate Zn(2+): H572, H576, C675, and H679.

This sequence belongs to the class-II aminoacyl-tRNA synthetase family. Requires Zn(2+) as cofactor.

Its subcellular location is the cytoplasm. It catalyses the reaction tRNA(Ala) + L-alanine + ATP = L-alanyl-tRNA(Ala) + AMP + diphosphate. In terms of biological role, catalyzes the attachment of alanine to tRNA(Ala) in a two-step reaction: alanine is first activated by ATP to form Ala-AMP and then transferred to the acceptor end of tRNA(Ala). Also edits incorrectly charged Ser-tRNA(Ala) and Gly-tRNA(Ala) via its editing domain. The polypeptide is Alanine--tRNA ligase (Leifsonia xyli subsp. xyli (strain CTCB07)).